Consider the following 556-residue polypeptide: MSVSAFNRRWAAVILEALTRQGVRHICIAPGSRSTPLTLAAAENSAFIHHTHFDERGLGHLALGLAKVSKQPVAVIVTSGTAVANLYPALIEAGLTGEKLILLTADRPPELIDCGANQAIRQPGMFASHPTHSISLPRPTQDIPARWLVSTIDHALGTLHAGGVHINCPFAEPLYGEMDDTGLSWQQRLGDWWQDDKPWLREAPRLESEKQRDWFFWRQKRGVVVAGRMSAEEGKKVALWAQTLGWPLIGDVLSQTGQPLPCADLWLGNAKATSELQQAQIVVQLGSSLTGKRLLQWQASCEPEEYWIVDDIEGRLDPAHHRGRRLIANIADWLEQHPAEKRQPWCVEIPRLAEQAMQAVIARRDAFGEAQLAHRISDYLPEQGQLFVGNSLVVRLIDALSQLPAGYPVYSNRGASGIDGLLSTAAGVQRASGKPTLAIVGDLSALYDLNALALLRQVSAPLVLIVVNNNGGQIFSLLPTPKNERERFYLMPQNVHFEHAAAMFELKYHRPQNWQELETALVDAWRTPTTTVIEMVVNDTDGAQTLQQLLAQVSHL.

The protein belongs to the TPP enzyme family. MenD subfamily. In terms of assembly, homodimer. Mg(2+) is required as a cofactor. Requires Mn(2+) as cofactor. Thiamine diphosphate serves as cofactor.

The enzyme catalyses isochorismate + 2-oxoglutarate + H(+) = 5-enolpyruvoyl-6-hydroxy-2-succinyl-cyclohex-3-ene-1-carboxylate + CO2. Its pathway is quinol/quinone metabolism; 1,4-dihydroxy-2-naphthoate biosynthesis; 1,4-dihydroxy-2-naphthoate from chorismate: step 2/7. The protein operates within quinol/quinone metabolism; menaquinone biosynthesis. Its function is as follows. Catalyzes the thiamine diphosphate-dependent decarboxylation of 2-oxoglutarate and the subsequent addition of the resulting succinic semialdehyde-thiamine pyrophosphate anion to isochorismate to yield 2-succinyl-5-enolpyruvyl-6-hydroxy-3-cyclohexene-1-carboxylate (SEPHCHC). This is 2-succinyl-5-enolpyruvyl-6-hydroxy-3-cyclohexene-1-carboxylate synthase from Escherichia coli (strain SMS-3-5 / SECEC).